Reading from the N-terminus, the 122-residue chain is Ribosome-binding factor A (122 aa).

It belongs to the RbfA family. As to quaternary structure, monomer. Binds 30S ribosomal subunits, but not 50S ribosomal subunits or 70S ribosomes.

Its subcellular location is the cytoplasm. Its function is as follows. One of several proteins that assist in the late maturation steps of the functional core of the 30S ribosomal subunit. Associates with free 30S ribosomal subunits (but not with 30S subunits that are part of 70S ribosomes or polysomes). Required for efficient processing of 16S rRNA. May interact with the 5'-terminal helix region of 16S rRNA. The protein is Ribosome-binding factor A of Burkholderia mallei (strain NCTC 10229).